Consider the following 443-residue polypeptide: Phosphoglucosamine mutase (443 aa).

S100 (phosphoserine intermediate) is an active-site residue. S100, D239, D241, and D243 together coordinate Mg(2+). The residue at position 100 (S100) is a Phosphoserine.

It belongs to the phosphohexose mutase family. Mg(2+) is required as a cofactor. Post-translationally, activated by phosphorylation.

The enzyme catalyses alpha-D-glucosamine 1-phosphate = D-glucosamine 6-phosphate. Its function is as follows. Catalyzes the conversion of glucosamine-6-phosphate to glucosamine-1-phosphate. In Shewanella loihica (strain ATCC BAA-1088 / PV-4), this protein is Phosphoglucosamine mutase.